We begin with the raw amino-acid sequence, 425 residues long: Interferon-activable protein 211 (425 aa).

The Pyrin domain maps to 1 to 88 (MVNEYKRIVL…AEILKKERSE (88 aa)). Basic and acidic residues predominate over residues 86–99 (RSEVTGETSLEKNG). The tract at residues 86 to 223 (RSEVTGETSL…QNQNIPRGAV (138 aa)) is disordered. Over residues 122 to 153 (TSATQEETSTAQAGTSTAQAGTSTAQAGTSTA) the composition is skewed to low complexity. 4 tandem repeats follow at residues 129 to 135 (TSTAQAG), 136 to 142 (TSTAQAG), 143 to 149 (TSTAQAG), and 150 to 156 (TSTAQKR). Positions 129–177 (TSTAQAGTSTAQAGTSTAQAGTSTAQKRKSMREEETGVKKSKAAKEPDQ) are 4 X 7 AA tandem repeats of T-S-T-A-Q-A-[GR]. Basic and acidic residues predominate over residues 159-176 (MREEETGVKKSKAAKEPD). The span at 190-206 (SPILHSSSSASSNILSA) shows a compositional bias: low complexity. Over residues 207–218 (KNQKSQPQNQNI) the composition is skewed to polar residues. Residues 213 to 413 (PQNQNIPRGA…CGDHSFVKVT (201 aa)) form the HIN-200 domain.

Belongs to the HIN-200 family. As to quaternary structure, interacts with HOXB2. Mononuclear phagocytes.

It is found in the nucleus. Its function is as follows. Inhibits cell growth via p53/TP53 and RB1-dependent and independent pathways. May work in synergy with TP53 to promote the transcription of CDKN1A/P21. This chain is Interferon-activable protein 211, found in Mus musculus (Mouse).